A 565-amino-acid polypeptide reads, in one-letter code: MAQRIFTLILLLCSTSVFAGLFDAPGRSQFVPADQAFAFDFQQNQHDLNLTWQIKDGYYLYRKQIRITPEHAKIADVQLPQGVWHEDEFYGKSEIYRDRLTLPVTINQASAGATLTVTYQGCADAGFCYPPETKTVPLSEVVANNEASQPVSVPQQEQPTAQLPFSALWALLIGIGIAFTPCVLPMYPLISGIVLGGKQRLSTARALLLTFIYVQGMALTYTALGLVVAAAGLQFQAALQHPYVLIGLAIVFTLLAMSMFGLFTLQLPSSLQTRLTLMSNRQQGGSPGGVFIMGAIAGLICSPCTTAPLSAILLYIAQSGNMWLGGGTLYLYALGMGLPLMLITVFGNRLLPKSGPWMEQVKTAFGFVILALPVFLLERVIGDIWGLRLWSALGVAFFGWAFITSLQAKRGWMRVVQIILLAAALVSVRPLQDWAFGATHTAQTQTHLNFTQIKTVDELNQALVEAKGKPVMLDLYADWCVACKEFEKYTFSDPQVQKALADTVLLQANVTANDAQDMALLKHLNVLGLPTILFFDGQGQEHPQARVTGFMDAETFSAHLRDRQP.

The signal sequence occupies residues 1–19 (MAQRIFTLILLLCSTSVFA). 2 disulfides stabilise this stretch: Cys122–Cys128 and Cys182–Cys304. Helical transmembrane passes span 163–183 (LPFSALWALLIGIGIAFTPCV), 208–228 (LLTFIYVQGMALTYTALGLVV), 243–263 (YVLIGLAIVFTLLAMSMFGLF), 289–309 (GVFIMGAIAGLICSPCTTAPL), 323–343 (WLGGGTLYLYALGMGLPLMLI), 357–377 (WMEQVKTAFGFVILALPVFLL), and 384–404 (IWGLRLWSALGVAFFGWAFIT). Residues 434 to 565 (WAFGATHTAQ…FSAHLRDRQP (132 aa)) enclose the Thioredoxin domain. The cysteines at positions 480 and 483 are disulfide-linked.

It belongs to the thioredoxin family. DsbD subfamily.

It is found in the cell inner membrane. It catalyses the reaction [protein]-dithiol + NAD(+) = [protein]-disulfide + NADH + H(+). The enzyme catalyses [protein]-dithiol + NADP(+) = [protein]-disulfide + NADPH + H(+). Its function is as follows. Required to facilitate the formation of correct disulfide bonds in some periplasmic proteins and for the assembly of the periplasmic c-type cytochromes. Acts by transferring electrons from cytoplasmic thioredoxin to the periplasm. This transfer involves a cascade of disulfide bond formation and reduction steps. The chain is Thiol:disulfide interchange protein DsbD from Escherichia coli O6:H1 (strain CFT073 / ATCC 700928 / UPEC).